Here is a 250-residue protein sequence, read N- to C-terminus: uncharacterized protein (250 aa).

An N-terminal signal peptide occupies residues 1–25 (MKTLRTLCVLMILSGVIFFGLKIDA).

This is an uncharacterized protein from Bacillus subtilis (strain 168).